We begin with the raw amino-acid sequence, 358 residues long: Programmed cell death protein 2-like (358 aa).

Residue Ala2 is modified to N-acetylalanine. The residue at position 20 (Ser20) is a Phosphoserine. A Phosphothreonine modification is found at Thr22.

Higher expression in lung, colon, mammary gland, cervix, stomach and small intestine.

In terms of biological role, over-expression suppresses AP1, CREB, NFAT, and NF-kB transcriptional activation, and delays cell cycle progression at S phase. The chain is Programmed cell death protein 2-like (PDCD2L) from Homo sapiens (Human).